Here is a 1094-residue protein sequence, read N- to C-terminus: MAESSSESDHFRCRDRLSPWAARSTHRGTRSLPTVEVTEKVNTITSTLQDTSRNLRQVDQMLGRYREYSNGQAGAIEHLKESLEQSIDQLRSQRLLRNSGGRSISVTSLSASDLDGGTGSELHHFPPTSPLKDYGDPQGIKRMRSRTGVRFVQETDDMTQLHGFHQSLRDLSSEQIRLGDDFNRELSRRSRSDAETKRALEELTEKLNEAQKQEVVSDRVERRLQELEREMRTERELVERRQDQLGLMSLQLQEALKKQEAKADEHEGAIKNKLRQTETEKNQLEQELELSRRLLNQSEGSRETLLHQVEELRTQLTKAEGDRKGLQHQVSQISKQQSNYQDEQGEDWRFRRGVEREKQDLEKQMSDLRVQLNFSAMASELEEVKRCMERKDKEKAHLASQVENLTRELENGEKQQLQMLDRLKEIQNHFDTCEAERKHADLQISELTRHAEDATKQAERYLSELQQSEALKEEAEKRREDLKLKAQESIRQWKLKHKKLERALEKQSETVDELTGKNNQILKEKDELKTQLYAALQQIENLRKELNDVLTKRALQEEELHSKEEKLRDIKSHQADLELEVKNSLDTIHRLESELKKQSKIQSQMKVEKAHLEEEIAELKKSQAQDKAKLLEMQESIKDLSAIRADLANKLAEEERAKKAVLKDLSDLTAQAKSRDEETATIITQLKLERDVHQRELKDLTSSLQSVKTKHEQNIQELMKHFKKEKSEAENHIRTLKAESLEEKNMAKIHRGQLEKLKSQCDRLTEELTQNENENKKLKLKYQCLKDQLEEREKHISIEEEHLRRMEEARLQLKDQLLCLETEQESILGVIGKEIDAACKTFSKDSVEKLKVFSSGPDIHYDPHRWLAESKTKLQWLCEELKERENREKNLRHQLMLCRQQLRNLTENKESELQCLFQQIERQEQLLDEIHREKRDLLEETQRKDEEMGSLQDRVIALETSTQVALDHLESVPEKLSLLEDFKDFRDSCSSSERTDGRYSKYRVRRNSLQHHQDDTKYRTKSFKGDRTFLEGSHTRGLDHSSSWQDHSRFLSSPRFSYVNSFTKRTVAPDSASNKEDATMNGTSSQPKKEEYGS.

The disordered stretch occupies residues 1 to 29 (MAESSSESDHFRCRDRLSPWAARSTHRGT). Over residues 7-17 (ESDHFRCRDRL) the composition is skewed to basic and acidic residues. Ser31 carries the phosphoserine modification. Residues 115-140 (DGGTGSELHHFPPTSPLKDYGDPQGI) form a disordered region. 2 coiled-coil regions span residues 190–827 (SRSD…QESI) and 879–959 (EELK…IALE). 3 positions are modified to phosphoserine: Ser249, Ser291, and Ser331. A disordered region spans residues 319–345 (AEGDRKGLQHQVSQISKQQSNYQDEQG). Polar residues predominate over residues 328 to 342 (HQVSQISKQQSNYQD). Positions 987–999 (DSCSSSERTDGRY) are enriched in basic and acidic residues. The segment at 987–1018 (DSCSSSERTDGRYSKYRVRRNSLQHHQDDTKY) is disordered. Over residues 1000 to 1009 (SKYRVRRNSL) the composition is skewed to basic residues. Position 1061 is a phosphoserine (Ser1061). Positions 1067-1094 (VAPDSASNKEDATMNGTSSQPKKEEYGS) are disordered.

Its subcellular location is the cytoplasm. It localises to the cytoskeleton. The protein resides in the microtubule organizing center. The protein localises to the centrosome. It is found in the centriole. Its subcellular location is the spindle pole. The polypeptide is Centrosomal protein of 128 kDa (CEP128) (Homo sapiens (Human)).